The sequence spans 185 residues: Ribosome-recycling factor (185 aa).

It belongs to the RRF family.

The protein localises to the cytoplasm. Its function is as follows. Responsible for the release of ribosomes from messenger RNA at the termination of protein biosynthesis. May increase the efficiency of translation by recycling ribosomes from one round of translation to another. The polypeptide is Ribosome-recycling factor (Erwinia tasmaniensis (strain DSM 17950 / CFBP 7177 / CIP 109463 / NCPPB 4357 / Et1/99)).